The primary structure comprises 359 residues: 4-hydroxy-3-methylbut-2-en-1-yl diphosphate synthase (flavodoxin) (359 aa).

[4Fe-4S] cluster is bound by residues Cys264, Cys267, Cys299, and Glu306.

The protein belongs to the IspG family. It depends on [4Fe-4S] cluster as a cofactor.

The catalysed reaction is (2E)-4-hydroxy-3-methylbut-2-enyl diphosphate + oxidized [flavodoxin] + H2O + 2 H(+) = 2-C-methyl-D-erythritol 2,4-cyclic diphosphate + reduced [flavodoxin]. It participates in isoprenoid biosynthesis; isopentenyl diphosphate biosynthesis via DXP pathway; isopentenyl diphosphate from 1-deoxy-D-xylulose 5-phosphate: step 5/6. Functionally, converts 2C-methyl-D-erythritol 2,4-cyclodiphosphate (ME-2,4cPP) into 1-hydroxy-2-methyl-2-(E)-butenyl 4-diphosphate. The sequence is that of 4-hydroxy-3-methylbut-2-en-1-yl diphosphate synthase (flavodoxin) from Helicobacter pylori (strain P12).